The chain runs to 414 residues: Probable mannose-1-phosphate guanyltransferase (414 aa).

This sequence belongs to the transferase hexapeptide repeat family.

The protein localises to the cytoplasm. Its subcellular location is the nucleus. The catalysed reaction is alpha-D-mannose 1-phosphate + GTP + H(+) = GDP-alpha-D-mannose + diphosphate. The protein operates within nucleotide-sugar biosynthesis; GDP-alpha-D-mannose biosynthesis; GDP-alpha-D-mannose from alpha-D-mannose 1-phosphate (GTP route): step 1/1. Functionally, involved in cell wall synthesis where it is required for glycosylation. The polypeptide is Probable mannose-1-phosphate guanyltransferase (Schizosaccharomyces pombe (strain 972 / ATCC 24843) (Fission yeast)).